A 350-amino-acid polypeptide reads, in one-letter code: Serine-threonine kinase receptor-associated protein (350 aa).

WD repeat units lie at residues 12 to 56 (GHTR…GTFL), 57 to 96 (GHKG…ELMT), 98 to 137 (AHKH…AEPK), 141 to 179 (GHTS…EVKS), 180 to 212 (LNFN…HSAV), 221 to 262 (EAPA…ESYK), and 263 to 302 (GHFG…TYGL). Phosphoserine is present on residues Ser312, Ser335, and Ser338. Residues 327–350 (EEELEEIASENSDSIYSSTPEVKA) form a disordered region. The span at 337–350 (NSDSIYSSTPEVKA) shows a compositional bias: polar residues. Tyr342 carries the post-translational modification Phosphotyrosine.

It belongs to the WD repeat STRAP family. In terms of assembly, part of the core SMN complex that contains SMN1, GEMIN2/SIP1, DDX20/GEMIN3, GEMIN4, GEMIN5, GEMIN6, GEMIN7, GEMIN8 and STRAP/UNRIP. Part of the SMN-Sm complex that contains SMN1, GEMIN2/SIP1, DDX20/GEMIN3, GEMIN4, GEMIN5, GEMIN6, GEMIN7, GEMIN8, STRAP/UNRIP and the Sm proteins SNRPB, SNRPD1, SNRPD2, SNRPD3, SNRPE, SNRPF and SNRPG. Interacts directly with GEMIN6 and GEMIN7. Associates with the SMN complex in the cytoplasm but not in the nucleus. Also interacts with CSDE1/UNR and MAWBP. Interacts with PDPK1. Interacts with TRIM48.

Its subcellular location is the cytoplasm. It localises to the nucleus. Its function is as follows. The SMN complex catalyzes the assembly of small nuclear ribonucleoproteins (snRNPs), the building blocks of the spliceosome, and thereby plays an important role in the splicing of cellular pre-mRNAs. Most spliceosomal snRNPs contain a common set of Sm proteins SNRPB, SNRPD1, SNRPD2, SNRPD3, SNRPE, SNRPF and SNRPG that assemble in a heptameric protein ring on the Sm site of the small nuclear RNA to form the core snRNP (Sm core). In the cytosol, the Sm proteins SNRPD1, SNRPD2, SNRPE, SNRPF and SNRPG are trapped in an inactive 6S pICln-Sm complex by the chaperone CLNS1A that controls the assembly of the core snRNP. To assemble core snRNPs, the SMN complex accepts the trapped 5Sm proteins from CLNS1A forming an intermediate. Binding of snRNA inside 5Sm triggers eviction of the SMN complex, thereby allowing binding of SNRPD3 and SNRPB to complete assembly of the core snRNP. STRAP plays a role in the cellular distribution of the SMN complex. Negatively regulates TGF-beta signaling but positively regulates the PDPK1 kinase activity by enhancing its autophosphorylation and by significantly reducing the association of PDPK1 with 14-3-3 protein. The chain is Serine-threonine kinase receptor-associated protein (STRAP) from Bos taurus (Bovine).